Consider the following 570-residue polypeptide: Formate--tetrahydrofolate ligase (570 aa).

65–72 (TPFGEGKT) is a binding site for ATP.

Belongs to the formate--tetrahydrofolate ligase family.

The catalysed reaction is (6S)-5,6,7,8-tetrahydrofolate + formate + ATP = (6R)-10-formyltetrahydrofolate + ADP + phosphate. Its pathway is one-carbon metabolism; tetrahydrofolate interconversion. The protein is Formate--tetrahydrofolate ligase of Shewanella sediminis (strain HAW-EB3).